The chain runs to 350 residues: Nicotinate-nucleotide--dimethylbenzimidazole phosphoribosyltransferase (350 aa).

Catalysis depends on Glu316, which acts as the Proton acceptor.

Belongs to the CobT family.

It carries out the reaction 5,6-dimethylbenzimidazole + nicotinate beta-D-ribonucleotide = alpha-ribazole 5'-phosphate + nicotinate + H(+). It participates in nucleoside biosynthesis; alpha-ribazole biosynthesis; alpha-ribazole from 5,6-dimethylbenzimidazole: step 1/2. Catalyzes the synthesis of alpha-ribazole-5'-phosphate from nicotinate mononucleotide (NAMN) and 5,6-dimethylbenzimidazole (DMB). This is Nicotinate-nucleotide--dimethylbenzimidazole phosphoribosyltransferase from Pseudomonas syringae pv. tomato (strain ATCC BAA-871 / DC3000).